Consider the following 154-residue polypeptide: Putative pre-16S rRNA nuclease (154 aa).

Belongs to the YqgF nuclease family.

It is found in the cytoplasm. Functionally, could be a nuclease involved in processing of the 5'-end of pre-16S rRNA. In Pelotomaculum thermopropionicum (strain DSM 13744 / JCM 10971 / SI), this protein is Putative pre-16S rRNA nuclease.